The primary structure comprises 173 residues: Probable chemoreceptor glutamine deamidase CheD 2 (173 aa).

The protein belongs to the CheD family.

It catalyses the reaction L-glutaminyl-[protein] + H2O = L-glutamyl-[protein] + NH4(+). Its function is as follows. Probably deamidates glutamine residues to glutamate on methyl-accepting chemotaxis receptors (MCPs), playing an important role in chemotaxis. The polypeptide is Probable chemoreceptor glutamine deamidase CheD 2 (Albidiferax ferrireducens (strain ATCC BAA-621 / DSM 15236 / T118) (Rhodoferax ferrireducens)).